A 222-amino-acid polypeptide reads, in one-letter code: UPF0502 protein Lcho_2066 (222 aa).

Belongs to the UPF0502 family.

In Leptothrix cholodnii (strain ATCC 51168 / LMG 8142 / SP-6) (Leptothrix discophora (strain SP-6)), this protein is UPF0502 protein Lcho_2066.